The following is a 59-amino-acid chain: Insertion element IS986 uncharacterized 6.6 kDa protein (59 aa).

The interval 1–26 (MRKWVRQAQVDAGARPGTTTEESAEI) is disordered.

The protein belongs to the transposase 8 family.

The chain is Insertion element IS986 uncharacterized 6.6 kDa protein from Mycobacterium tuberculosis.